Here is a 779-residue protein sequence, read N- to C-terminus: MFFAFLITYLLGGVTFLPFILFIYLLTRPTHKSEELRIIEPNNDCLTKLDKDIRIQGWIRVTTKFLQGKSGSVKVQEIPQDQLPKSSSDNAVTDRKTISPSGINNQYVIRNPKDVYYATVQAGKLHLFDPVKTSELLHVINLHEYLVVFYPGTVTENELFSNRNAIFLKYPAVSHKKESSTKSLLNKDLYVYGRTPSNKEDWNYALLSYSKISPAIKPLEAPIDFDYASVHHNLTALSSPDTDWLNAFIGRIFLGIHKTEGFKSLVVEKLTKKLSRIKTPGIMTDVKVIDVDVGEAIPTVNGLKFESLSNGGELIVSADIWYEGDCSFKAETTANIKFGSHFPSKTVPLALVIRLTHVSGKVRLLIKPPPSNRVWYAFYEKPRLHLIVEPMVARKQLTNNYLINFITQKLVELVHETIVMPNMNDLAFFIDNEAPIKGGLWDIELFRAPTIQKPAEKDAKAERKKSGLSSSTSEESLNRHISKRSSNSNDTAPSSHIIADKNLEPTSNIQLKKNPDGNLVETSELSDSDENSVLSNKSSTLSKKVVENTSPLKYTHSASKSFIGEVQDSLQALKTKAHKPRSIGGDSSQTTLSETTKKYGSVAKKSFFQGVSDAKSFVKKIKSTYIDDSSSNSPSDIESNYSADDNEISKSKAQNAIDFNVTNTHSPSRSISSEKSYKAAERGQQDKHNDVLVDLNPNVEAEKSNPHSNSQKTSKNDMSRNQRNKYAKEIMTGQPTLHPQGQLPIQNVEQRATHKPLPRPPVQVETREPVRPVPPIPKL.

At 1 to 2 the chain is on the cytoplasmic side; sequence MF. Residues 3–23 form a helical; Signal-anchor for type II membrane protein membrane-spanning segment; that stretch reads FAFLITYLLGGVTFLPFILFI. Residues 24–779 lie on the Lumenal side of the membrane; the sequence is YLLTRPTHKS…VRPVPPIPKL (756 aa). Asparagine 233 carries N-linked (GlcNAc...) asparagine glycosylation. Positions 238-429 constitute an SMP-LTD domain; that stretch reads SSPDTDWLNA…MPNMNDLAFF (192 aa). Residues 454-465 show a composition bias toward basic and acidic residues; it reads PAEKDAKAERKK. Disordered regions lie at residues 454–539 and 573–592; these read PAEK…NKSS and LKTKAHKPRSIGGDSSQTTL. Phosphoserine is present on serine 473. A compositionally biased stretch (polar residues) spans 484–494; it reads RSSNSNDTAPS. N-linked (GlcNAc...) asparagine glycosylation is found at asparagine 489 and asparagine 536. 2 N-linked (GlcNAc...) asparagine glycosylation sites follow: asparagine 640 and asparagine 660. Residues 654–779 form a disordered region; sequence QNAIDFNVTN…VRPVPPIPKL (126 aa). The span at 660 to 674 shows a compositional bias: polar residues; sequence NVTNTHSPSRSISSE. Positions 675–691 are enriched in basic and acidic residues; sequence KSYKAAERGQQDKHNDV. The segment covering 733–750 has biased composition (polar residues); sequence GQPTLHPQGQLPIQNVEQ.

It is found in the endoplasmic reticulum membrane. The protein localises to the nucleus membrane. Its function is as follows. During endoplasmic reticulum (ER) stress or when cellular ceramide levels increase, induces contacts between the ER and medial-Golgi complex to facilitate non-vesicular transport of ceramides from the ER to the Golgi complex where they are converted to complex sphingolipids, preventing toxic ceramide accumulation. This chain is Nucleus-vacuole junction protein 2 (nvj2), found in Schizosaccharomyces pombe (strain 972 / ATCC 24843) (Fission yeast).